The chain runs to 239 residues: tRNA (guanine-N(1)-)-methyltransferase (239 aa).

S-adenosyl-L-methionine contacts are provided by residues G110 and 129 to 134; that span reads LGDFVL.

This sequence belongs to the RNA methyltransferase TrmD family. Homodimer.

Its subcellular location is the cytoplasm. It catalyses the reaction guanosine(37) in tRNA + S-adenosyl-L-methionine = N(1)-methylguanosine(37) in tRNA + S-adenosyl-L-homocysteine + H(+). In terms of biological role, specifically methylates guanosine-37 in various tRNAs. The polypeptide is tRNA (guanine-N(1)-)-methyltransferase (Clostridium beijerinckii (strain ATCC 51743 / NCIMB 8052) (Clostridium acetobutylicum)).